Here is a 97-residue protein sequence, read N- to C-terminus: Co-chaperonin GroES (97 aa).

The protein belongs to the GroES chaperonin family. Heptamer of 7 subunits arranged in a ring. Interacts with the chaperonin GroEL.

The protein localises to the cytoplasm. In terms of biological role, together with the chaperonin GroEL, plays an essential role in assisting protein folding. The GroEL-GroES system forms a nano-cage that allows encapsulation of the non-native substrate proteins and provides a physical environment optimized to promote and accelerate protein folding. GroES binds to the apical surface of the GroEL ring, thereby capping the opening of the GroEL channel. This chain is Co-chaperonin GroES, found in Wigglesworthia glossinidia brevipalpis.